The sequence spans 189 residues: MTEYKLVVVGAGGVGKSALTIQLIQNHFVDEYDPTIEDSYRKQVVIDGETCLLDILDTAGQEEYSAMRDQYMRTGEGFLCVFAINNTKSFEDIHQYREQIKRVKDSDDVPMVLVGNKCDLPARTVETRQAQDLARSYGIPYIETSAKTRQGVEDAFYTLVREIRQHKLRKLNPPDESGPGCMNCKCVIS.

The residue at position 1 (Met-1) is an N-acetylmethionine. The residue at position 2 (Thr-2) is an N-acetylthreonine; in GTPase HRas, N-terminally processed. 10-17 (GAGGVGKS) is a binding site for GTP. The Effector region signature appears at 32–40 (YDPTIEDSY). GTP-binding positions include 57–61 (DTAGQ) and 116–119 (NKCD). Cys-118 is modified (S-nitrosocysteine). The tract at residues 166–185 (HKLRKLNPPDESGPGCMNCK) is hypervariable region. S-palmitoyl cysteine attachment occurs at residues Cys-181 and Cys-184. Position 186 is a cysteine methyl ester (Cys-186). Residue Cys-186 is the site of S-farnesyl cysteine attachment. The propeptide at 187-189 (VIS) is removed in mature form.

Belongs to the small GTPase superfamily. Ras family. In terms of processing, palmitoylated by the ZDHHC9-GOLGA7 complex. A continuous cycle of de- and re-palmitoylation regulates rapid exchange between plasma membrane and Golgi.

It localises to the cell membrane. Its subcellular location is the golgi apparatus membrane. It carries out the reaction GTP + H2O = GDP + phosphate + H(+). Alternates between an inactive form bound to GDP and an active form bound to GTP. Activated by a guanine nucleotide-exchange factor (GEF) and inactivated by a GTPase-activating protein (GAP). Functionally, ras proteins bind GDP/GTP and possess intrinsic GTPase activity. In Gallus gallus (Chicken), this protein is GTPase HRas (HRAS).